The following is a 256-amino-acid chain: Imidazole glycerol phosphate synthase subunit HisF (256 aa).

Residues Asp-12 and Asp-131 contribute to the active site.

The protein belongs to the HisA/HisF family. As to quaternary structure, heterodimer of HisH and HisF.

The protein resides in the cytoplasm. It carries out the reaction 5-[(5-phospho-1-deoxy-D-ribulos-1-ylimino)methylamino]-1-(5-phospho-beta-D-ribosyl)imidazole-4-carboxamide + L-glutamine = D-erythro-1-(imidazol-4-yl)glycerol 3-phosphate + 5-amino-1-(5-phospho-beta-D-ribosyl)imidazole-4-carboxamide + L-glutamate + H(+). The protein operates within amino-acid biosynthesis; L-histidine biosynthesis; L-histidine from 5-phospho-alpha-D-ribose 1-diphosphate: step 5/9. Its function is as follows. IGPS catalyzes the conversion of PRFAR and glutamine to IGP, AICAR and glutamate. The HisF subunit catalyzes the cyclization activity that produces IGP and AICAR from PRFAR using the ammonia provided by the HisH subunit. The chain is Imidazole glycerol phosphate synthase subunit HisF from Pseudomonas syringae pv. syringae (strain B728a).